The following is a 403-amino-acid chain: S-adenosylmethionine synthase (403 aa).

An ATP-binding site is contributed by His-15. Residue Asp-17 participates in Mg(2+) binding. A K(+)-binding site is contributed by Glu-43. 2 residues coordinate L-methionine: Glu-56 and Gln-99. Residues Gln-99 to Arg-109 are flexible loop. ATP is bound by residues Asp-166–Lys-168, Lys-232–Phe-233, Asp-241, Arg-247–Lys-248, Ala-264, and Lys-268. Asp-241 is an L-methionine binding site. Residue Lys-272 coordinates L-methionine.

It belongs to the AdoMet synthase family. In terms of assembly, homotetramer; dimer of dimers. The cofactor is Mg(2+). It depends on K(+) as a cofactor.

It is found in the cytoplasm. It carries out the reaction L-methionine + ATP + H2O = S-adenosyl-L-methionine + phosphate + diphosphate. Its pathway is amino-acid biosynthesis; S-adenosyl-L-methionine biosynthesis; S-adenosyl-L-methionine from L-methionine: step 1/1. Catalyzes the formation of S-adenosylmethionine (AdoMet) from methionine and ATP. The overall synthetic reaction is composed of two sequential steps, AdoMet formation and the subsequent tripolyphosphate hydrolysis which occurs prior to release of AdoMet from the enzyme. This is S-adenosylmethionine synthase from Xanthomonas campestris pv. campestris (strain 8004).